The sequence spans 654 residues: Protein THALLO (654 aa).

The span at 1–16 (MGKKGGTLKRSSKSTK) shows a compositional bias: basic residues. 3 disordered regions span residues 1 to 23 (MGKK…DIVE), 35 to 145 (KQRD…SDDE), and 164 to 212 (SITA…KDTH). The Nuclear localization signal 1 motif lies at 2–9 (GKKGGTLK). 3 stretches are compositionally biased toward acidic residues: residues 44-56 (VNDD…EDDV), 64-82 (GVDD…EEAE), and 103-114 (GDDEMADDDKDK). Residues 140–160 (LSSDDEDIKAEEEEVIRLRAE) adopt a coiled-coil conformation. Acidic residues predominate over residues 171-181 (GLDDDSEEDSD). Positions 182 to 212 (RELTMEEISDKGKQATKSITDKKEKGDKDTH) are enriched in basic and acidic residues. Positions 243–263 (LSELNDAVEELESKINPVMNK) form a coiled coil. Disordered stretches follow at residues 362–397 (SDSV…HQND), 470–492 (VSTK…DDIG), and 509–654 (KSSE…SIRM). Over residues 364–387 (SVDRITQDTAKPMKIDNAREEKKK) the composition is skewed to basic and acidic residues. The segment covering 524 to 546 (SDDEDDNDGDNNDMVDNDGESED) has biased composition (acidic residues). Positions 552–561 (VKQKQQAKRA) are enriched in basic residues. Over residues 588–599 (SNQMVSNRGLTR) the composition is skewed to polar residues. The Nuclear localization signal 2 motif lies at 608-615 (PRKKYRKN). A compositionally biased stretch (polar residues) spans 645–654 (NPNTSRSIRM).

Belongs to the SAS10 family. As to quaternary structure, interacts with NUCL1, NUCL2, JMJ14, NOF1 and MPP10 in the nucleus. In terms of tissue distribution, mainly present in tissues undergoing rapid cellular growth and differentiation. Mostly expressed in shoots and flowers, and, to a lower extent, in leaves, siliques, roots and seedlings.

It is found in the nucleus. Its subcellular location is the nucleolus. Its function is as follows. Essential protein during embryogenesis. Involved both in gene transcription regulation and in processing events critical for proper rRNA biogenesis and nucleolar organization during reproduction; contributes to pre-rRNA processing at the 5' external transcribed spacer. Binds RNA. This is Protein THALLO from Arabidopsis thaliana (Mouse-ear cress).